A 246-amino-acid chain; its full sequence is Non-structural protein ORF4b (246 aa).

Residues 1–28 (MEESLMDVPSTSGTQVYSRKARKRSHSP) are disordered. The span at 19 to 28 (RKARKRSHSP) shows a compositional bias: basic residues. Positions 22–38 (RKRSHSPTKKLRYVKRR) match the Nuclear localization motif motif.

Interacts with host KPNA4; this interaction inhibits the nuclear import of NF-kappa-B complex.

The protein resides in the host nucleus. Its subcellular location is the host nucleolus. It localises to the host cytoplasm. Plays a role in the inhibition of host innate immunity by inhibiting the interaction between host IKBKE and MAVS. In turn, this inhibition prevents the production of host interferon beta. Additionally, inhibits host NF-kappa-B by interacting with host KPNA4 and thereby preventing the translocation of the NF-kappa-B complex into the nucleus by this importin. This is Non-structural protein ORF4b (ORF4b) from Camelus dromedarius (Dromedary).